Consider the following 67-residue polypeptide: MARITVEDCLKQIPNRFELALAATYRARQLAQGHTPKIESRDKPTVVALREIASGLVGVEMLKKVPV.

Belongs to the RNA polymerase subunit omega family. As to quaternary structure, the RNAP catalytic core consists of 2 alpha, 1 beta, 1 beta' and 1 omega subunit. When a sigma factor is associated with the core the holoenzyme is formed, which can initiate transcription.

The enzyme catalyses RNA(n) + a ribonucleoside 5'-triphosphate = RNA(n+1) + diphosphate. In terms of biological role, promotes RNA polymerase assembly. Latches the N- and C-terminal regions of the beta' subunit thereby facilitating its interaction with the beta and alpha subunits. The chain is DNA-directed RNA polymerase subunit omega from Burkholderia ambifaria (strain ATCC BAA-244 / DSM 16087 / CCUG 44356 / LMG 19182 / AMMD) (Burkholderia cepacia (strain AMMD)).